Reading from the N-terminus, the 572-residue chain is DNA polymerase (572 aa).

A 3'-5' exonuclease and strand displacement activities region spans residues 1–222 (MPRKMYSCDF…LGLDKEVRYA (222 aa)). Residues 56 to 66 (YFHNLKFDGAF) form an interaction with the primer terminal protein region. Residues Asp-142 and Asp-166 each contribute to the Mg(2+) site. Residues 223–226 (YRGG) form a DNA-binding; Involved in the formation of a stable complex between TP and phi29 DNA polymerase region. Positions 227 to 572 (FTWLNDRFKE…VLVDDTFTIK (346 aa)) are initiation, polymerization and pyrophosphorolytic activities. Asp-246 and Val-247 together coordinate Mg(2+). Tyr-251, Lys-368, and Lys-380 together coordinate 5-methyl-UTP. Mg(2+) is bound by residues Asp-453 and Asp-455. Position 455 (Asp-455) interacts with 5-methyl-UTP.

This sequence belongs to the DNA polymerase type-B family. In terms of assembly, interacts with the primer terminal protein; this interaction allows the initiation of TP-primed DNA replication at both viral DNA ends. Interacts with DNA. Mg(2+) is required as a cofactor.

The catalysed reaction is DNA(n) + a 2'-deoxyribonucleoside 5'-triphosphate = DNA(n+1) + diphosphate. In terms of biological role, polymerase responsible for protein-primed viral DNA replication by strand displacement with high processivity and fidelity. To start replication, the DNA polymerase forms a heterodimer with a free primer terminal protein (TP), recognizes the replication origins at both 5' ends of the linear chromosome, and initiates replication using as primer the OH-group of Ser-232 of the TP. This polymerase possesses three enzymatic activities: DNA synthesis (polymerase), primer terminal protein (TP) deoxynucleotidylation, which is the formation of a covalent linkage (phosphoester) between the hydroxyl group of a specific serine residue in TP and 5'-dAMP, a reaction directed by the second T at the 3' end, and 3' to 5' exonuclease activity. Exonuclease activity has a proofreading purpose. The protein is DNA polymerase (2) of Bacillus subtilis (Bacteriophage PZA).